The sequence spans 69 residues: Large ribosomal subunit protein uL29 (69 aa).

This sequence belongs to the universal ribosomal protein uL29 family.

In Rhodopseudomonas palustris (strain BisB5), this protein is Large ribosomal subunit protein uL29.